Here is a 92-residue protein sequence, read N- to C-terminus: Small ribosomal subunit protein uS19c (92 aa).

The segment at 73-92 is disordered; it reads EFSPTRTYRGHAKKDKKAKR. A compositionally biased stretch (basic residues) spans 80 to 92; the sequence is YRGHAKKDKKAKR.

It belongs to the universal ribosomal protein uS19 family.

It localises to the plastid. The protein localises to the chloroplast. Its function is as follows. Protein S19 forms a complex with S13 that binds strongly to the 16S ribosomal RNA. The protein is Small ribosomal subunit protein uS19c (rps19) of Chlamydomonas reinhardtii (Chlamydomonas smithii).